We begin with the raw amino-acid sequence, 426 residues long: Proline--tRNA ligase (426 aa).

The protein belongs to the class-II aminoacyl-tRNA synthetase family. ProS type 2 subfamily. As to quaternary structure, homodimer.

It is found in the cytoplasm. The catalysed reaction is tRNA(Pro) + L-proline + ATP = L-prolyl-tRNA(Pro) + AMP + diphosphate. Its function is as follows. Catalyzes the attachment of proline to tRNA(Pro) in a two-step reaction: proline is first activated by ATP to form Pro-AMP and then transferred to the acceptor end of tRNA(Pro). The sequence is that of Proline--tRNA ligase from Anaplasma phagocytophilum (strain HZ).